Consider the following 360-residue polypeptide: Isocitrate dehydrogenase [NAD] subunit 1, mitochondrial (360 aa).

The transit peptide at M1–L11 directs the protein to the mitochondrion. Positions 109, 140, and 228 each coordinate substrate. Residue D228 coordinates Mg(2+).

The protein belongs to the isocitrate and isopropylmalate dehydrogenases family. As to quaternary structure, octamer of two non-identical subunits IDH1 and IDH2. Mg(2+) is required as a cofactor. Mn(2+) serves as cofactor.

It localises to the mitochondrion. The enzyme catalyses D-threo-isocitrate + NAD(+) = 2-oxoglutarate + CO2 + NADH. Its activity is regulated as follows. Allosterically regulated by several compounds including AMP, NAD(+), and citrate. Performs an essential role in the oxidative function of the citric acid cycle. Also binds RNA; specifically to the 5'-untranslated leaders of mitochondrial mRNAs. The sequence is that of Isocitrate dehydrogenase [NAD] subunit 1, mitochondrial (IDH1) from Saccharomyces cerevisiae (strain ATCC 204508 / S288c) (Baker's yeast).